Consider the following 364-residue polypeptide: MFVAKSIAADHKDLIHDVSYDFHGRRMATCSSDQSVKVWDKGDDGEWHCTASWKTHSGSVWRVTWAHPEFGQVLASCSFDRTAAVWEEIVGESNDKQRGQSHWIKRTTLVDSRTSVTDVKFAPKHMGLMLTTCSADGVVRIYEAPDVMNLSQWSLQHEISCKLACSCISWNPSSSRAHPPMIAVGGDDSNGAYSGKVQIHEYNENTRKYAKAETLMTVTDPVHDIAFAPNLGRSFHVLAIATKDVRIFKLLPLRRESANSSGPTKFEVQVMAQFDSHNSQVWRVSWNITSTLLASSGDDGCVRLWKANYMDNWKCTGILRGDGSPVNGSSGPSAALSAVGVPGAAQMIVGAATAGRKKAQLMPG.

6 WD repeats span residues 10–49 (DHKD…EWHC), 55–96 (THSG…SNDK), 111–152 (DSRT…NLSQ), 160–210 (SCKL…RKYA), 217–258 (TVTD…RESA), and 276–315 (SHNS…NWKC).

The protein belongs to the WD repeat SEC13 family. As to quaternary structure, component of the Nup107-160 subcomplex of the nuclear pore complex (NPC). The Nup107-160 subcomplex includes NUP160, NUP133, NUP107, NUP98, NUP85, NUP43, NUP37, SEH1 and SEC13. Component of the GATOR2 subcomplex, composed of MIOS, SEC13, SEH1L, WDR24 and WDR59. The GATOR2 complex interacts with CASTOR1 and CASTOR2; the interaction is negatively regulated by arginine. The GATOR2 complex interacts with SESN1, SESN2 and SESN3; the interaction is negatively regulated by amino acids.

The protein resides in the chromosome. Its subcellular location is the centromere. It localises to the kinetochore. It is found in the nucleus. The protein localises to the nuclear pore complex. The protein resides in the lysosome membrane. The GATOR2 complex is negatively regulated by the upstream amino acid sensors CASTOR1 and SESN2, which sequester the GATOR2 complex in absence of amino acids. In the presence of abundant amino acids, GATOR2 is released from CASTOR1 and SESN2 and activated. Its function is as follows. Component of the Nup107-160 subcomplex of the nuclear pore complex (NPC). The Nup107-160 subcomplex is required for the assembly of a functional NPC. The Nup107-160 subcomplex is also required for normal kinetochore microtubule attachment, mitotic progression and chromosome segregation. This subunit plays a role in recruitment of the Nup107-160 subcomplex to the kinetochore. As a component of the GATOR2 complex, functions as an activator of the amino acid-sensing branch of the mTORC1 signaling pathway. The GATOR2 complex indirectly activates mTORC1 through the inhibition of the GATOR1 subcomplex. GATOR2 probably acts as an E3 ubiquitin-protein ligase toward GATOR1. In the presence of abundant amino acids, the GATOR2 complex mediates ubiquitination of the NPRL2 core component of the GATOR1 complex, leading to GATOR1 inactivation. In the absence of amino acids, GATOR2 is inhibited, activating the GATOR1 complex. The chain is Nucleoporin SEH1 (seh1l) from Danio rerio (Zebrafish).